Consider the following 106-residue polypeptide: Nucleoid-associated protein Smal_0858 (106 aa).

The segment at 81–106 (IDAESKSKMGSATAGMQLPPGMKLPF) is disordered.

Belongs to the YbaB/EbfC family. As to quaternary structure, homodimer.

It localises to the cytoplasm. It is found in the nucleoid. Functionally, binds to DNA and alters its conformation. May be involved in regulation of gene expression, nucleoid organization and DNA protection. This chain is Nucleoid-associated protein Smal_0858, found in Stenotrophomonas maltophilia (strain R551-3).